Consider the following 525-residue polypeptide: Biotinidase (525 aa).

The signal sequence occupies residues 1–26 (MSRAGRQLALLLCSCCVAVAIPGGLA). Residues 54-333 (DPLALTSREQ…PGLISAGNAT (280 aa)) form the CN hydrolase domain. E94 serves as the catalytic Proton acceptor. 2 N-linked (GlcNAc...) asparagine glycosylation sites follow: N132 and N185. The active-site Proton donor is K194. C227 (nucleophile) is an active-site residue. An N-linked (GlcNAc...) asparagine glycan is attached at N384.

It belongs to the carbon-nitrogen hydrolase superfamily. BTD/VNN family.

Its subcellular location is the secreted. It is found in the extracellular space. It catalyses the reaction biocytin + H2O = biotin + L-lysine. The catalysed reaction is biotin amide + H2O = biotin + NH4(+). Catalytic release of biotin from biocytin, the product of biotin-dependent carboxylases degradation. The polypeptide is Biotinidase (BTD) (Bos taurus (Bovine)).